A 349-amino-acid chain; its full sequence is Protein BCCIP homolog (349 aa).

Basic residues predominate over residues Met1 to Gly10. The segment at Met1–Gln65 is disordered. Positions Ala11–Glu33 are enriched in basic and acidic residues. The segment covering Glu34–Gln65 has biased composition (acidic residues).

The protein belongs to the BCP1 family.

The polypeptide is Protein BCCIP homolog (Caenorhabditis elegans).